The primary structure comprises 317 residues: Universal stress protein Mb2019 (317 aa).

ATP-binding positions include G13, 128–134, 142–143, G175, D208, 277–283, and 291–293; these read GYRGQGA, SV, GSHGRGG, and SVS.

The protein belongs to the universal stress protein A family.

This Mycobacterium bovis (strain ATCC BAA-935 / AF2122/97) protein is Universal stress protein Mb2019.